The chain runs to 149 residues: Large ribosomal subunit protein bL9 (149 aa).

This sequence belongs to the bacterial ribosomal protein bL9 family.

In terms of biological role, binds to the 23S rRNA. This Shewanella amazonensis (strain ATCC BAA-1098 / SB2B) protein is Large ribosomal subunit protein bL9.